The following is a 192-amino-acid chain: Protein hunchback (192 aa).

Disordered stretches follow at residues 16–59 (SHHH…SNTN), 88–108 (AAMT…WPGL), and 151–192 (ALTP…KYMA). Residues 17 to 31 (HHHHHHHAHHSRRQH) are compositionally biased toward basic residues. Positions 92–103 (PSPSNNDQNSPL) are enriched in polar residues. Positions 173-192 (EPEKEHDLMSNSSEDMKYMA) are enriched in basic and acidic residues.

This sequence belongs to the hunchback C2H2-type zinc-finger protein family.

Its subcellular location is the nucleus. Functionally, gap class segmentation protein that controls development of head structures. This is Protein hunchback (hb) from Drosophila adiastola (Fruit fly).